Here is a 377-residue protein sequence, read N- to C-terminus: Succinyl-diaminopimelate desuccinylase (377 aa).

Zn(2+) is bound at residue histidine 67. Aspartate 69 is an active-site residue. Aspartate 100 serves as a coordination point for Zn(2+). The active-site Proton acceptor is the glutamate 134. Zn(2+) is bound by residues glutamate 135, glutamate 163, and histidine 349.

The protein belongs to the peptidase M20A family. DapE subfamily. As to quaternary structure, homodimer. Zn(2+) serves as cofactor. The cofactor is Co(2+).

It carries out the reaction N-succinyl-(2S,6S)-2,6-diaminopimelate + H2O = (2S,6S)-2,6-diaminopimelate + succinate. It functions in the pathway amino-acid biosynthesis; L-lysine biosynthesis via DAP pathway; LL-2,6-diaminopimelate from (S)-tetrahydrodipicolinate (succinylase route): step 3/3. In terms of biological role, catalyzes the hydrolysis of N-succinyl-L,L-diaminopimelic acid (SDAP), forming succinate and LL-2,6-diaminopimelate (DAP), an intermediate involved in the bacterial biosynthesis of lysine and meso-diaminopimelic acid, an essential component of bacterial cell walls. In Buchnera aphidicola subsp. Baizongia pistaciae (strain Bp), this protein is Succinyl-diaminopimelate desuccinylase.